A 378-amino-acid chain; its full sequence is DNA primase small subunit PriS (378 aa).

Active-site residues include D98, D100, and D282.

The protein belongs to the eukaryotic-type primase small subunit family. Heterodimer of a small subunit (PriS) and a large subunit (PriL). Mg(2+) serves as cofactor. Requires Mn(2+) as cofactor.

Its function is as follows. Catalytic subunit of DNA primase, an RNA polymerase that catalyzes the synthesis of short RNA molecules used as primers for DNA polymerase during DNA replication. The small subunit contains the primase catalytic core and has DNA synthesis activity on its own. Binding to the large subunit stabilizes and modulates the activity, increasing the rate of DNA synthesis while decreasing the length of the DNA fragments, and conferring RNA synthesis capability. The DNA polymerase activity may enable DNA primase to also catalyze primer extension after primer synthesis. May also play a role in DNA repair. The polypeptide is DNA primase small subunit PriS (Methanosphaerula palustris (strain ATCC BAA-1556 / DSM 19958 / E1-9c)).